The sequence spans 202 residues: MFAYIRGRLEYKNNDFLIVESNGVGYRIFTSLSTISGIGEIGQEVKVYTYLYVREDVISLYGFLTQEELNVFELLISVSGVGPKAAVSVLSAISPSRFSLAVITDDVKTLTKAQGIGKKIAQRIILELKDKIKKEQLTEYAQSEEGGKVLDTDSSKMAEAVSALMVLGYSPAEANKAVSAVYREDMDIETIIKNALKGLARP.

The segment at 1-64 is domain I; that stretch reads MFAYIRGRLE…EDVISLYGFL (64 aa). The domain II stretch occupies residues 65–143; sequence TQEELNVFEL…KEQLTEYAQS (79 aa). A flexible linker region spans residues 144-152; the sequence is EEGGKVLDT. Residues 152-202 form a domain III region; the sequence is TDSSKMAEAVSALMVLGYSPAEANKAVSAVYREDMDIETIIKNALKGLARP.

The protein belongs to the RuvA family. In terms of assembly, homotetramer. Forms an RuvA(8)-RuvB(12)-Holliday junction (HJ) complex. HJ DNA is sandwiched between 2 RuvA tetramers; dsDNA enters through RuvA and exits via RuvB. An RuvB hexamer assembles on each DNA strand where it exits the tetramer. Each RuvB hexamer is contacted by two RuvA subunits (via domain III) on 2 adjacent RuvB subunits; this complex drives branch migration. In the full resolvosome a probable DNA-RuvA(4)-RuvB(12)-RuvC(2) complex forms which resolves the HJ.

It localises to the cytoplasm. In terms of biological role, the RuvA-RuvB-RuvC complex processes Holliday junction (HJ) DNA during genetic recombination and DNA repair, while the RuvA-RuvB complex plays an important role in the rescue of blocked DNA replication forks via replication fork reversal (RFR). RuvA specifically binds to HJ cruciform DNA, conferring on it an open structure. The RuvB hexamer acts as an ATP-dependent pump, pulling dsDNA into and through the RuvAB complex. HJ branch migration allows RuvC to scan DNA until it finds its consensus sequence, where it cleaves and resolves the cruciform DNA. In Acetivibrio thermocellus (strain ATCC 27405 / DSM 1237 / JCM 9322 / NBRC 103400 / NCIMB 10682 / NRRL B-4536 / VPI 7372) (Clostridium thermocellum), this protein is Holliday junction branch migration complex subunit RuvA.